The chain runs to 397 residues: Argininosuccinate synthase (397 aa).

Residue 8–16 (AYSGGLDTS) coordinates ATP. Residues Tyr86 and Ser91 each contribute to the L-citrulline site. Gly116 provides a ligand contact to ATP. L-aspartate contacts are provided by Thr118, Asn122, and Asp123. Asn122 serves as a coordination point for L-citrulline. Positions 126, 175, 184, 260, and 272 each coordinate L-citrulline.

The protein belongs to the argininosuccinate synthase family. Type 1 subfamily. In terms of assembly, homotetramer.

It localises to the cytoplasm. It catalyses the reaction L-citrulline + L-aspartate + ATP = 2-(N(omega)-L-arginino)succinate + AMP + diphosphate + H(+). It participates in amino-acid biosynthesis; L-arginine biosynthesis; L-arginine from L-ornithine and carbamoyl phosphate: step 2/3. The protein is Argininosuccinate synthase of Clostridium botulinum (strain ATCC 19397 / Type A).